The chain runs to 214 residues: Cytochrome b (214 aa).

Transmembrane regions (helical) follow at residues 31 to 51, 75 to 96, 111 to 131, and 176 to 196; these read FGSM…FLAI, WIMQ…YIHI, WLSG…GYVL, and FFAL…IHIL. The heme b site is built by His-81 and His-95. 2 residues coordinate heme b: His-180 and His-194. His-199 is an a ubiquinone binding site.

The protein belongs to the cytochrome b family. The cytochrome bc1 complex contains 3 respiratory subunits (MT-CYB, CYC1 and UQCRFS1), 2 core proteins (UQCRC1 and UQCRC2) and probably 6 low-molecular weight proteins. Heme b serves as cofactor.

The protein resides in the mitochondrion inner membrane. In terms of biological role, component of the ubiquinol-cytochrome c reductase complex (complex III or cytochrome b-c1 complex) that is part of the mitochondrial respiratory chain. The b-c1 complex mediates electron transfer from ubiquinol to cytochrome c. Contributes to the generation of a proton gradient across the mitochondrial membrane that is then used for ATP synthesis. This Bothrops bilineatus (Green jararaca) protein is Cytochrome b (MT-CYB).